Here is a 308-residue protein sequence, read N- to C-terminus: ABC transporter protein AbcA (308 aa).

In terms of domain architecture, ABC transporter spans 6 to 245 (LAVSGVNKSF…YHKLLHMEGD (240 aa)). Residue 58-65 (GHNGAGKS) participates in ATP binding.

The protein belongs to the ABC transporter superfamily.

Functionally, influences the expression of the surface array protein gene (vapA). May have both regulatory and transport activities. The chain is ABC transporter protein AbcA (abcA) from Aeromonas salmonicida.